A 365-amino-acid chain; its full sequence is Geranylgeranyl pyrophosphate synthase (365 aa).

Over residues 1-11 (MKPLPSTNGKV) the composition is skewed to polar residues. A disordered region spans residues 1 to 36 (MKPLPSTNGKVNGNGKHHDSSLSSTSSTSSSSSSDT). Residues 21 to 34 (SLSSTSSTSSSSSS) are compositionally biased toward low complexity. The isopentenyl diphosphate site is built by K78, R81, and H110. Mg(2+)-binding residues include D117 and D121. Position 126 (R126) interacts with dimethylallyl diphosphate. Residue R127 participates in isopentenyl diphosphate binding. Dimethylallyl diphosphate contacts are provided by K211, T212, and Q247. Residue D250 participates in Mg(2+) binding. Residues N254, K263, and K273 each coordinate dimethylallyl diphosphate.

This sequence belongs to the FPP/GGPP synthase family. Requires Mg(2+) as cofactor.

It catalyses the reaction isopentenyl diphosphate + dimethylallyl diphosphate = (2E)-geranyl diphosphate + diphosphate. The catalysed reaction is isopentenyl diphosphate + (2E)-geranyl diphosphate = (2E,6E)-farnesyl diphosphate + diphosphate. It carries out the reaction isopentenyl diphosphate + (2E,6E)-farnesyl diphosphate = (2E,6E,10E)-geranylgeranyl diphosphate + diphosphate. Functionally, geranylgeranyl pyrophosphate synthase that catalyzes the trans-addition of the three molecules of IPP onto DMAPP to form geranylgeranyl pyrophosphate. Does not show any monoterpene nor sesquiterpene synthase activity. The sequence is that of Geranylgeranyl pyrophosphate synthase from Melampsora lini (Rust fungus).